We begin with the raw amino-acid sequence, 1265 residues long: Dynactin subunit 1 (1265 aa).

The region spanning 27 to 69 (GMTSFAVGKWVGVVLDEPKGKNSGSIKGQQYFQCDENCGMFVR) is the CAP-Gly domain. The tract at residues 81–179 (GSRRSIEDVS…GNGAASHASS (99 aa)) is disordered. Residues S85, S110, S114, S117, and S121 each carry the phosphoserine modification. Low complexity-rich tracts occupy residues 103 to 138 (RLSS…SSSS) and 161 to 177 (AEGA…ASHA). S183 carries the post-translational modification Phosphoserine. Coiled coils occupy residues 213 to 570 (NSGA…ESLQ), 812 to 836 (LIQF…RLPS), and 967 to 1084 (QRAQ…NSTT). The disordered stretch occupies residues 1082 to 1106 (STTGKVQPGSESHSPHNISLSGNTS). S1117 bears the Phosphoserine mark. Residues 1128–1160 (EEVELLKNAFNQERNQRLRLQAQDMRAKLSQFE) are a coiled coil.

Belongs to the dynactin 150 kDa subunit family. In terms of assembly, monomer and homodimer. Subunit of dynactin, a multiprotein complex part of a tripartite complex with dynein and a adapter, such as BICDL1, BICD2 or HOOK3. The dynactin complex is built around ACTR1A/ACTB filament and consists of an actin-related filament composed of a shoulder domain, a pointed end and a barbed end. Its length is defined by its flexible shoulder domain. The soulder is composed of 2 DCTN1 subunits, 4 DCTN2 and 2 DCTN3. DCTN1/p150(glued) binds directly to microtubules and to cytoplasmic dynein.

It localises to the cytoplasm. The protein localises to the cytoskeleton. Part of the dynactin complex that activates the molecular motor dynein for ultra-processive transport along microtubules. Plays a key role in dynein-mediated retrograde transport of vesicles and organelles along microtubules by recruiting and tethering dynein to microtubules. Binds to both dynein and microtubules providing a link between specific cargos, microtubules and dynein. Essential for targeting dynein to microtubule plus ends, recruiting dynein to membranous cargos and enhancing dynein processivity (the ability to move along a microtubule for a long distance without falling off the track). Can also act as a brake to slow the dynein motor during motility along the microtubule. Can regulate microtubule stability by promoting microtubule formation, nucleation and polymerization and by inhibiting microtubule catastrophe in neurons. Inhibits microtubule catastrophe by binding both to microtubules and to tubulin, leading to enhanced microtubule stability along the axon. Plays a role in metaphase spindle orientation. Plays a role in centriole cohesion and subdistal appendage organization and function. Its recruitment to the centriole in a KIF3A-dependent manner is essential for the maintenance of centriole cohesion and the formation of subdistal appendage. Also required for microtubule anchoring at the mother centriole. Plays a role in primary cilia formation. The protein is Dynactin subunit 1 of Drosophila melanogaster (Fruit fly).